The sequence spans 196 residues: GTP cyclohydrolase 1 (196 aa).

Zn(2+) contacts are provided by Cys84, His87, and Cys157.

It belongs to the GTP cyclohydrolase I family. As to quaternary structure, toroid-shaped homodecamer, composed of two pentamers of five dimers.

It carries out the reaction GTP + H2O = 7,8-dihydroneopterin 3'-triphosphate + formate + H(+). Its pathway is cofactor biosynthesis; 7,8-dihydroneopterin triphosphate biosynthesis; 7,8-dihydroneopterin triphosphate from GTP: step 1/1. The sequence is that of GTP cyclohydrolase 1 from Corynebacterium glutamicum (strain R).